We begin with the raw amino-acid sequence, 268 residues long: Trans-aconitate 2-methyltransferase (268 aa).

This sequence belongs to the methyltransferase superfamily. Tam family.

Its subcellular location is the cytoplasm. The enzyme catalyses trans-aconitate + S-adenosyl-L-methionine = (E)-3-(methoxycarbonyl)pent-2-enedioate + S-adenosyl-L-homocysteine. Catalyzes the S-adenosylmethionine monomethyl esterification of trans-aconitate. The polypeptide is Trans-aconitate 2-methyltransferase (Delftia acidovorans (strain DSM 14801 / SPH-1)).